A 399-amino-acid polypeptide reads, in one-letter code: Phosphoglycerate kinase (399 aa).

Substrate contacts are provided by residues 22–24 (DFN), Arg37, 60–63 (HFGR), Arg118, and Arg151. ATP is bound by residues Lys201, Glu322, and 352-355 (GGDS).

Belongs to the phosphoglycerate kinase family. As to quaternary structure, monomer.

The protein localises to the cytoplasm. It catalyses the reaction (2R)-3-phosphoglycerate + ATP = (2R)-3-phospho-glyceroyl phosphate + ADP. It functions in the pathway carbohydrate degradation; glycolysis; pyruvate from D-glyceraldehyde 3-phosphate: step 2/5. This is Phosphoglycerate kinase from Wolbachia sp. subsp. Brugia malayi (strain TRS).